The following is a 410-amino-acid chain: Arginine deiminase (410 aa).

C400 (amidino-cysteine intermediate) is an active-site residue.

Belongs to the arginine deiminase family.

Its subcellular location is the cytoplasm. It carries out the reaction L-arginine + H2O = L-citrulline + NH4(+). The protein operates within amino-acid degradation; L-arginine degradation via ADI pathway; carbamoyl phosphate from L-arginine: step 1/2. The polypeptide is Arginine deiminase (Levilactobacillus brevis (strain ATCC 367 / BCRC 12310 / CIP 105137 / JCM 1170 / LMG 11437 / NCIMB 947 / NCTC 947) (Lactobacillus brevis)).